A 380-amino-acid chain; its full sequence is DNA replication and repair protein RecF (380 aa).

30-37 serves as a coordination point for ATP; the sequence is GNNAQGKS.

It belongs to the RecF family.

The protein resides in the cytoplasm. Its function is as follows. The RecF protein is involved in DNA metabolism; it is required for DNA replication and normal SOS inducibility. RecF binds preferentially to single-stranded, linear DNA. It also seems to bind ATP. The sequence is that of DNA replication and repair protein RecF from Rippkaea orientalis (strain PCC 8801 / RF-1) (Cyanothece sp. (strain PCC 8801)).